The chain runs to 496 residues: GTPase Der (496 aa).

EngA-type G domains are found at residues 3-166 (PVIA…VGKF) and 209-382 (VKLA…TCAT). GTP contacts are provided by residues 9–16 (GRPNVGKS), 56–60 (DTGGI), 118–121 (NKTD), 215–222 (GRPNVGKS), 262–266 (DTAGV), and 327–330 (NKWD). A KH-like domain is found at 383–467 (RRVGTSMLTR…PIRIQFKEGE (85 aa)).

It belongs to the TRAFAC class TrmE-Era-EngA-EngB-Septin-like GTPase superfamily. EngA (Der) GTPase family. In terms of assembly, associates with the 50S ribosomal subunit.

Its function is as follows. GTPase that plays an essential role in the late steps of ribosome biogenesis. The polypeptide is GTPase Der (Proteus mirabilis (strain HI4320)).